A 126-amino-acid polypeptide reads, in one-letter code: Glycine cleavage system H protein (126 aa).

The region spanning Thr-21–Lys-103 is the Lipoyl-binding domain. The residue at position 62 (Lys-62) is an N6-lipoyllysine.

This sequence belongs to the GcvH family. As to quaternary structure, the glycine cleavage system is composed of four proteins: P, T, L and H. (R)-lipoate serves as cofactor.

In terms of biological role, the glycine cleavage system catalyzes the degradation of glycine. The H protein shuttles the methylamine group of glycine from the P protein to the T protein. The sequence is that of Glycine cleavage system H protein from Vibrio parahaemolyticus serotype O3:K6 (strain RIMD 2210633).